Consider the following 234-residue polypeptide: MEFSPPLQRATLIQRYKRFLADVITPDGRELTLHCPNTGAMTGCATPGDTVWYSTSDNTKRKYPHTWELTQSQSGAFICVNTLWANRLTKEAILNESISELSGYSSLKSEVKYGAEHSRIDFMLQADSRPDCYIEVKSVTLAENEQGYFPDAVTERGQKHLRELMSVAAEGQRAVIFFAVLHSAITRFSPARHIDEKYAQLLSEAQQRGVEILAYKAELSAEGMALKKSLPVTL.

The H-T-H motif DNA-binding region spans 201–220; sequence LLSEAQQRGVEILAYKAELS.

This sequence belongs to the SfsA family.

In terms of biological role, binds to DNA non-specifically. Could be a regulatory factor involved in maltose metabolism. The chain is Sugar fermentation stimulation protein A from Escherichia coli O7:K1 (strain IAI39 / ExPEC).